The chain runs to 304 residues: RNA polymerase II holoenzyme cyclin-like subunit (304 aa).

A Cyclin N-terminal domain is found at 43-174 (TIHDSKANKQ…LIEELQSYLI (132 aa)).

The protein belongs to the cyclin family. Cyclin C subfamily. Component of the SRB8-11 complex, a regulatory module of the Mediator complex.

It localises to the nucleus. Its function is as follows. Component of the SRB8-11 complex. The SRB8-11 complex is a regulatory module of the Mediator complex which is itself involved in regulation of basal and activated RNA polymerase II-dependent transcription. The SRB8-11 complex may be involved in the transcriptional repression of a subset of genes regulated by Mediator. It may inhibit the association of the Mediator complex with RNA polymerase II to form the holoenzyme complex. The SRB8-11 complex phosphorylates the C-terminal domain (CTD) of the largest subunit of RNA polymerase II. The protein is RNA polymerase II holoenzyme cyclin-like subunit (SSN8) of Kluyveromyces lactis (strain ATCC 8585 / CBS 2359 / DSM 70799 / NBRC 1267 / NRRL Y-1140 / WM37) (Yeast).